The following is a 292-amino-acid chain: MEITASLVKELRERTGAGMMECKKALVENAGDIDAAAEWLRKSGLAKADKKADRVAAEGRIATAQAGGKAVLVEVNSETDFVAKDENFLAFTEVVANAALNSDAADAEALKSVKLDSGETIEERRAAVIAKVGENLQVRRLVRIDSANNVAAYVHGGRIGVLVELKGGDIELARGIAMHIAAMNPPHVKASDVPAEFVAKEKEIELAKMSEKDKAKPADILEKIISGKISKIVNEVTLYGQPYVLNTDQTVEQAVKAAGAEVIRFQRLAVGEGIEKVVEDYAAEVMKQAGLA.

The involved in Mg(2+) ion dislocation from EF-Tu stretch occupies residues 79–82 (TDFV).

The protein belongs to the EF-Ts family.

Its subcellular location is the cytoplasm. Associates with the EF-Tu.GDP complex and induces the exchange of GDP to GTP. It remains bound to the aminoacyl-tRNA.EF-Tu.GTP complex up to the GTP hydrolysis stage on the ribosome. The protein is Elongation factor Ts of Xanthomonas oryzae pv. oryzae (strain MAFF 311018).